A 186-amino-acid chain; its full sequence is Protein Syd (186 aa).

The protein belongs to the Syd family.

It is found in the cell inner membrane. Functionally, interacts with the SecY protein in vivo. May bind preferentially to an uncomplexed state of SecY, thus functioning either as a chelating agent for excess SecY in the cell or as a regulatory factor that negatively controls the translocase function. This chain is Protein Syd, found in Pseudoalteromonas atlantica (strain T6c / ATCC BAA-1087).